We begin with the raw amino-acid sequence, 596 residues long: MVDIAEAMPTTASSLPSDEALRKFKCPECTKAFKFKHHLKEHIRIHSGEKPFECQQCHKRFSHSGSYSSHMSSKKCVQQASPSMVTPFNPYQLMMYRNIMLQLQTPQVSFLPSTAANNMDYMSLLQANLFQSLENGTSPTPTQEPSAPASPEPKIEVVDEPEVSSEVKTEVKTEVKTEDSVPEESITPAVSMSLSPAPEQNGNESMNNGGSGSDGKSSPDWRPLRSRSFLNDSQVAVLQNHFKRNPFPSKYELSAVAEQIGVNKRVVQVWFQNTRAKERRSNRLPSMPRGSVASAAAAAATSPTVWQTPVQLMAAWASQFSNGNNSLTASQDERNNENTDEVMDHDGLKDGKETPLDLTLSTDDTEPEWSPEKLIGFLDQTGGVIQELLRQAGNGFVTNQEDEEEKPIKAEESPVSSGSSSIWPSFIGQYPSILDSASLSVLEKALDQQKSSEDDASSLCSNESKLLKFPTTPLKEEEGLFSCDQCDKVFGKQSSLARHKYEHSGQRPYKCDICEKAFKHKHHLTEHKRLHSGEKPFQCDKCLKRFSHSGSYSQHMNHRYSYCKPYREQPASPSDVLNGGSVTVSPSSSNTPPPST.

The C2H2-type 1 zinc-finger motif lies at 24 to 46 (FKCPECTKAFKFKHHLKEHIRIH). The segment at 52–72 (FECQQCHKRFSHSGSYSSHMS) adopts a C2H2-type 2; degenerate zinc-finger fold. Polar residues predominate over residues 133 to 145 (LENGTSPTPTQEP). 3 disordered regions span residues 133-225 (LENG…RPLR), 324-369 (NNSL…EPEW), and 395-421 (GFVT…GSSS). A compositionally biased stretch (basic and acidic residues) spans 165–179 (SEVKTEVKTEVKTED). The segment covering 188–200 (PAVSMSLSPAPEQ) has biased composition (polar residues). A compositionally biased stretch (low complexity) spans 201–216 (NGNESMNNGGSGSDGK). The homeobox DNA-binding region spans 223–282 (PLRSRSFLNDSQVAVLQNHFKRNPFPSKYELSAVAEQIGVNKRVVQVWFQNTRAKERRSN). The segment covering 331–355 (QDERNNENTDEVMDHDGLKDGKETP) has biased composition (basic and acidic residues). 2 C2H2-type zinc fingers span residues 481–503 (FSCD…KYEH) and 509–531 (YKCD…KRLH). The segment at 537 to 560 (FQCDKCLKRFSHSGSYSQHMNHRY) adopts a C2H2-type 5; degenerate zinc-finger fold. The disordered stretch occupies residues 569–596 (QPASPSDVLNGGSVTVSPSSSNTPPPST). Positions 578–590 (NGGSVTVSPSSSN) are enriched in low complexity.

In terms of tissue distribution, expressed in the six touch receptor neurons (TRNs) but not in the FLP and PVD neurons. Expressed in the M4 cholinergic motor neuron.

The protein resides in the nucleus. Functionally, transcription factor. Down-regulates expression of genes involved in either the synthesis or reuptake of serotonin, dopamine and GABA. Acts as a transcriptional repressor to regulate multiple, discrete, neuron-specific aspects of terminal differentiation, including cell migration, axonal development and gene expression. Promotes touch receptor neuron differentiation by repressing the expression of egl-44 and egl-46. As egl-44 and egl-46, probably acting as a heterodimer, repress expression of zag-1 in FLP neurons, together these proteins form a bistable, negative-feedback loop that regulates the choice between neuronal fates. Required for axon guidance. Involved in the proper development of the pharynx. Required for pharynx isthmus peristalsis, probably via a role in the differentiation of the M4 cholinergic motor neuron. Directly represses its own transcription by interacting with conserved E-box sequence motifs 5'-CACCTG-3' in its own promoter. May also act as a transcriptional activator of the homeodomain ceh-28. This chain is Zinc finger E-box-binding homeobox protein zag-1, found in Caenorhabditis elegans.